A 416-amino-acid polypeptide reads, in one-letter code: LL-diaminopimelate aminotransferase (416 aa).

The substrate site is built by Y15 and G42. Pyridoxal 5'-phosphate contacts are provided by residues Y72, 108-109 (SK), Y132, N187, Y218, and 246-248 (SFS). Residues K109, Y132, and N187 each coordinate substrate. K249 carries the N6-(pyridoxal phosphate)lysine modification. The pyridoxal 5'-phosphate site is built by R257 and N292. N292 and R388 together coordinate substrate.

The protein belongs to the class-I pyridoxal-phosphate-dependent aminotransferase family. LL-diaminopimelate aminotransferase subfamily. Homodimer. The cofactor is pyridoxal 5'-phosphate.

The catalysed reaction is (2S,6S)-2,6-diaminopimelate + 2-oxoglutarate = (S)-2,3,4,5-tetrahydrodipicolinate + L-glutamate + H2O + H(+). Its pathway is amino-acid biosynthesis; L-lysine biosynthesis via DAP pathway; LL-2,6-diaminopimelate from (S)-tetrahydrodipicolinate (aminotransferase route): step 1/1. Its function is as follows. Involved in the synthesis of meso-diaminopimelate (m-DAP or DL-DAP), required for both lysine and peptidoglycan biosynthesis. Catalyzes the direct conversion of tetrahydrodipicolinate to LL-diaminopimelate. In Synechococcus sp. (strain JA-2-3B'a(2-13)) (Cyanobacteria bacterium Yellowstone B-Prime), this protein is LL-diaminopimelate aminotransferase.